Consider the following 451-residue polypeptide: NAC domain containing protein 52 (451 aa).

The segment at 1–21 (MGRESVAVVTAPPSATAPGTA) is disordered. The NAC domain maps to 27–178 (LAPGFRFHPT…AYVLCRVFHK (152 aa)). Residues 126-184 (LGMKKTLVFHSGRAPDGLRTNWVMHEYRLVEYETEKNGNLVQDAYVLCRVFHKNNIGPP) mediate DNA binding. Disordered regions lie at residues 255 to 337 (DQQN…TTTT) and 370 to 400 (KKEK…KVND). Over residues 256-270 (QQNHHENDLKPEEHN) the composition is skewed to basic and acidic residues. Positions 272 to 292 (NNNYDENEETLKREQMEEEER) form a coiled coil. Low complexity predominate over residues 318-337 (ESNNNSSRNTQDHCSSTTTT). Over residues 370–384 (KKEKPQQPLRPHKEP) the composition is skewed to basic and acidic residues. The stretch at 398 to 446 (VNDLQKEIHQMSVERETFKLEMMSAEAMISILQSRIDALRQENEELKKN) forms a coiled coil.

Interacts with JMJ14 and NAC050. Mostly expressed in floral organs, and, at low levels, in other organs.

The protein resides in the nucleus. Functionally, transcriptional repressor that binds to the motif 5'-(C/T)A(C/A)G-3' in the promoter of target genes. Also binds to the 5'-CTTGNNNNNCAAG-3' consensus sequence in chromatin. Can bind to the mitochondrial dysfunction motif (MDM) present in the upstream regions of mitochondrial dysfunction stimulon (MDS) genes involved in mitochondrial retrograde regulation (MRR). Together with NAC050 and JMJ14, regulates gene expression and flowering time by associating with the histone demethylase JMJ14, probably by the promotion of RNA-mediated gene silencing. Regulates siRNA-dependent post-transcriptional gene silencing (PTGS) through SGS3 expression modulation. Required during pollen development. The chain is NAC domain containing protein 52 from Arabidopsis thaliana (Mouse-ear cress).